A 287-amino-acid polypeptide reads, in one-letter code: 2-dehydro-3-deoxyphosphooctonate aldolase (287 aa).

The protein belongs to the KdsA family.

The protein localises to the cytoplasm. It catalyses the reaction D-arabinose 5-phosphate + phosphoenolpyruvate + H2O = 3-deoxy-alpha-D-manno-2-octulosonate-8-phosphate + phosphate. It participates in carbohydrate biosynthesis; 3-deoxy-D-manno-octulosonate biosynthesis; 3-deoxy-D-manno-octulosonate from D-ribulose 5-phosphate: step 2/3. The protein operates within bacterial outer membrane biogenesis; lipopolysaccharide biosynthesis. This chain is 2-dehydro-3-deoxyphosphooctonate aldolase, found in Leptospira interrogans serogroup Icterohaemorrhagiae serovar copenhageni (strain Fiocruz L1-130).